A 252-amino-acid polypeptide reads, in one-letter code: Probable endonuclease 4 (252 aa).

Residues histidine 56, histidine 96, glutamate 129, aspartate 162, histidine 165, histidine 191, aspartate 204, histidine 206, and glutamate 233 each coordinate Zn(2+).

It belongs to the AP endonuclease 2 family. Requires Zn(2+) as cofactor.

The catalysed reaction is Endonucleolytic cleavage to 5'-phosphooligonucleotide end-products.. Functionally, endonuclease IV plays a role in DNA repair. It cleaves phosphodiester bonds at apurinic or apyrimidinic (AP) sites, generating a 3'-hydroxyl group and a 5'-terminal sugar phosphate. The protein is Probable endonuclease 4 of Mycobacterium ulcerans (strain Agy99).